The chain runs to 741 residues: MVNNPTAIEIQQTKLYQQWGLTDSEYELICTKILKRLPNYTETGLFSVMWSEHCSYKNSKPILKKFPTNGPHVLQGPGEGAGILDIGDGQAVVFKAESHNHPSAVEPYEGAATGVGGIIRDIFSMGATPIAILDSLRFGELNDNQTKYLVQEVVAGIGGYGNCIGIPTVGGEISFDPCYQANPLVNAMCVGLIEQKDIQQGKARGAGNSVLYVGAKTGRDGIHGATFASDEFAEGKATQRSAVQVGDPFMEKLLMDACLELILQHSDWLVGIQDMGAAGLVSSTAEMAAKAGTGMILDLDQVPQRETDMSAYEIMLSESQERMALCVRAGYEDQVIALFKGYDLDAVRIGEVTTKEQYQLWHQGQLVADLPVAALTDAAPVYHKDQAKPERLATFAAQAPYVPSVTDTQATWLALLKQPTIADKSSFYRHYDAQVKTNTVVLPGSDAAVVRIRGTKKALAMTTDCNGRYLYLDPHVGGQIAVAEAARNIVAAGGQPLGITDCLNYGNPEKPAVFWEFDQSAQGIAAACETFGTPVISGNVSLYNEFNGEAIYPTPMIGMVGLIRDIQDITTQDFKQVDDLIYLIGETDDNYAGSELQKMQQGTISDQLGHFSLATEKANQDLVLKAIQQGLITSAHDLSEGGLAVALSEATFKQGLGYHVQVDLASRQLFAETQSRFIVTVKAANQAAFEQISDQSAQLIGRVTAEPIMHIQTKDEMIDLTVEAAKDAWEAALPCLMKSEA.

Residue H53 is part of the active site. ATP-binding residues include Y56 and K95. E97 provides a ligand contact to Mg(2+). Residues 98–101 (SHNH) and R120 each bind substrate. The active-site Proton acceptor is the H99. D121 provides a ligand contact to Mg(2+). A substrate-binding site is contributed by Q244. D274 contacts Mg(2+). 318 to 320 (ESQ) is a binding site for substrate. Residues D501 and G538 each coordinate ATP. Position 539 (N539) interacts with Mg(2+). S541 provides a ligand contact to substrate.

The protein belongs to the FGAMS family. Monomer. Part of the FGAM synthase complex composed of 1 PurL, 1 PurQ and 2 PurS subunits.

It localises to the cytoplasm. It carries out the reaction N(2)-formyl-N(1)-(5-phospho-beta-D-ribosyl)glycinamide + L-glutamine + ATP + H2O = 2-formamido-N(1)-(5-O-phospho-beta-D-ribosyl)acetamidine + L-glutamate + ADP + phosphate + H(+). The protein operates within purine metabolism; IMP biosynthesis via de novo pathway; 5-amino-1-(5-phospho-D-ribosyl)imidazole from N(2)-formyl-N(1)-(5-phospho-D-ribosyl)glycinamide: step 1/2. In terms of biological role, part of the phosphoribosylformylglycinamidine synthase complex involved in the purines biosynthetic pathway. Catalyzes the ATP-dependent conversion of formylglycinamide ribonucleotide (FGAR) and glutamine to yield formylglycinamidine ribonucleotide (FGAM) and glutamate. The FGAM synthase complex is composed of three subunits. PurQ produces an ammonia molecule by converting glutamine to glutamate. PurL transfers the ammonia molecule to FGAR to form FGAM in an ATP-dependent manner. PurS interacts with PurQ and PurL and is thought to assist in the transfer of the ammonia molecule from PurQ to PurL. The sequence is that of Phosphoribosylformylglycinamidine synthase subunit PurL from Latilactobacillus sakei subsp. sakei (strain 23K) (Lactobacillus sakei subsp. sakei).